The following is an 87-amino-acid chain: Small ribosomal subunit protein uS17 (87 aa).

The protein belongs to the universal ribosomal protein uS17 family. Part of the 30S ribosomal subunit.

Functionally, one of the primary rRNA binding proteins, it binds specifically to the 5'-end of 16S ribosomal RNA. The protein is Small ribosomal subunit protein uS17 of Bacillus thuringiensis (strain Al Hakam).